Consider the following 397-residue polypeptide: Dual-specificity RNA methyltransferase RlmN (397 aa).

Catalysis depends on glutamate 130, which acts as the Proton acceptor. One can recognise a Radical SAM core domain in the interval 138 to 377; the sequence is VEDRGAVCIS…ASPIRTPRGR (240 aa). Cysteine 145 and cysteine 383 are oxidised to a cystine. Residues cysteine 152, cysteine 156, and cysteine 159 each coordinate [4Fe-4S] cluster. Residues 209–210, serine 241, 263–265, and asparagine 340 each bind S-adenosyl-L-methionine; these read GE and SLH. The active-site S-methylcysteine intermediate is cysteine 383.

It belongs to the radical SAM superfamily. RlmN family. Requires [4Fe-4S] cluster as cofactor.

It localises to the cytoplasm. The enzyme catalyses adenosine(2503) in 23S rRNA + 2 reduced [2Fe-2S]-[ferredoxin] + 2 S-adenosyl-L-methionine = 2-methyladenosine(2503) in 23S rRNA + 5'-deoxyadenosine + L-methionine + 2 oxidized [2Fe-2S]-[ferredoxin] + S-adenosyl-L-homocysteine. It catalyses the reaction adenosine(37) in tRNA + 2 reduced [2Fe-2S]-[ferredoxin] + 2 S-adenosyl-L-methionine = 2-methyladenosine(37) in tRNA + 5'-deoxyadenosine + L-methionine + 2 oxidized [2Fe-2S]-[ferredoxin] + S-adenosyl-L-homocysteine. Its function is as follows. Specifically methylates position 2 of adenine 2503 in 23S rRNA and position 2 of adenine 37 in tRNAs. m2A2503 modification seems to play a crucial role in the proofreading step occurring at the peptidyl transferase center and thus would serve to optimize ribosomal fidelity. The chain is Dual-specificity RNA methyltransferase RlmN from Granulibacter bethesdensis (strain ATCC BAA-1260 / CGDNIH1).